The following is a 400-amino-acid chain: Keratin, type I cytoskeletal 19 (400 aa).

A head region spans residues 1–79 (MTSYSYRQSS…TASDGLLAGN (79 aa)). At R7 the chain carries Omega-N-methylarginine. Residues S14 and S22 each carry the phosphoserine modification. R24 bears the Asymmetric dimethylarginine; alternate mark. R24 is subject to Omega-N-methylarginine; alternate. Residue R32 is modified to Omega-N-methylarginine. A phosphoserine mark is found at S35 and S40. R43 and R51 each carry omega-N-methylarginine. Residues S57 and S72 each carry the phosphoserine modification. The tract at residues 80 to 115 (EKLTMQNLNDRLASYLDKVRALEAANGELEVKIRDW) is coil 1A. Residues 80–391 (EKLTMQNLND…SLLEGQEDHY (312 aa)) enclose the IF rod domain. Residues 116–133 (YQKQGPGPSRDYSHYYTT) form a linker 1 region. The segment at 134–225 (IQDLRDKILG…KNHEEEISTL (92 aa)) is coil 1B. Residues 226 to 248 (RGQVGGQVSVEVDSAPGTDLAKI) are linker 12. The segment at 244-390 (DLAKILSDMR…RSLLEGQEDH (147 aa)) is necessary for interaction with PNN. The interval 249–387 (LSDMRSQYEV…ATYRSLLEGQ (139 aa)) is coil 2. Residue T323 is modified to Phosphothreonine. The segment at 388–400 (EDHYSNLSASKVL) is rod-like helical tail. Residue Y391 is modified to Phosphotyrosine. The residue at position 395 (S395) is a Phosphoserine.

It belongs to the intermediate filament family. As to quaternary structure, heterotetramer of two type I and two type II keratins. Interacts with PNN and the actin-binding domain of DMD.

Involved in the organization of myofibers. Together with KRT8, helps to link the contractile apparatus to dystrophin at the costameres of striated muscle. The polypeptide is Keratin, type I cytoskeletal 19 (Pongo abelii (Sumatran orangutan)).